The primary structure comprises 182 residues: Ribosome-recycling factor (182 aa).

Positions 136-158 (IKKQEKEGDLSEDQSRDEQDQVQ) are disordered.

Belongs to the RRF family.

The protein localises to the cytoplasm. Responsible for the release of ribosomes from messenger RNA at the termination of protein biosynthesis. May increase the efficiency of translation by recycling ribosomes from one round of translation to another. This Synechococcus sp. (strain CC9311) protein is Ribosome-recycling factor.